The primary structure comprises 288 residues: Serine/threonine-protein acetyltransferase YopJ (288 aa).

Active-site residues include histidine 109 and glutamate 128. Residue histidine 109 participates in CoA binding. CoA is bound at residue 167 to 168; the sequence is RS. The active site involves cysteine 172. Residues 182 to 185 and 224 to 225 each bind 1D-myo-inositol hexakisphosphate; these read KLYI and KH. 227–230 serves as a coordination point for CoA; sequence QGKK. Residue arginine 257 participates in 1D-myo-inositol hexakisphosphate binding. 266–270 contributes to the CoA binding site; that stretch reads DGKEL.

The protein belongs to the acetyltransferase YopJ family. Requires 1D-myo-inositol hexakisphosphate as cofactor.

The protein localises to the secreted. The catalysed reaction is L-threonyl-[protein] + acetyl-CoA = O-acetyl-L-threonyl-[protein] + CoA. It carries out the reaction L-seryl-[protein] + acetyl-CoA = O-acetyl-L-seryl-[protein] + CoA. 1D-myo-inositol hexakisphosphate activates protein-acetyltransferase activity via an allosteric mechanism: 1D-myo-inositol hexakisphosphate-binding induces a conformational rearrangement that stimulates the interaction with acetyl-CoA. In terms of biological role, serine/threonine-protein acetyltransferase translocated into infected cells, which inhibits the host immune response and induces cell death by mediating acetylation of target proteins. Inhibits the MAPK and NF-kappa-B signaling pathways by acetylating protein-kinases such as MAP2K1, MAP2K6, MAP3K7/TAK1 and I-kappa-B kinase (CHUK/IKKA and IKBKB) on serine and threonine residues critical for their activation by phosphorylation, thereby preventing protein-kinase activation. Promotes pyroptosis, a programmed cell death, in host cells by mediating acetylation of MAP3K7/TAK1: MAP3K7/TAK1 inactivation triggers activation of caspase-8 (CASP8), followed by CASP8-dependent cleavage of gasdermin-D (GSDMD) and induction of pyroptosis. The sequence is that of Serine/threonine-protein acetyltransferase YopJ from Yersinia pestis.